Here is a 264-residue protein sequence, read N- to C-terminus: DNA-directed RNA polymerase subunit Rpo3 (264 aa).

[3Fe-4S] cluster is bound by residues Cys203, Cys206, and Cys209.

The protein belongs to the archaeal Rpo3/eukaryotic RPB3 RNA polymerase subunit family. Part of the RNA polymerase complex. [3Fe-4S] cluster is required as a cofactor.

It is found in the cytoplasm. The catalysed reaction is RNA(n) + a ribonucleoside 5'-triphosphate = RNA(n+1) + diphosphate. DNA-dependent RNA polymerase (RNAP) catalyzes the transcription of DNA into RNA using the four ribonucleoside triphosphates as substrates. In Archaeoglobus fulgidus (strain ATCC 49558 / DSM 4304 / JCM 9628 / NBRC 100126 / VC-16), this protein is DNA-directed RNA polymerase subunit Rpo3.